We begin with the raw amino-acid sequence, 155 residues long: Troponin C, body wall muscle (155 aa).

An N-acetylvaline modification is found at Val1. EF-hand domains are found at residues 7-43, 44-79, 88-121, and 122-155; these read DEKS…LGQN, PTEK…QMQA, REEK…TGEN, and VETW…KFVQ. 5 residues coordinate Ca(2+): Asp57, Asp59, Ser61, Thr63, and Glu68. Positions 135, 137, 139, 141, and 146 each coordinate Ca(2+).

This sequence belongs to the troponin C family.

In terms of biological role, troponin is the central regulatory protein of muscle contraction. Tn consists of three components: Tn-I which is the inhibitor of actomyosin ATPase, Tn-T which contains the binding site for tropomyosin and Tn-C. The binding of calcium to Tn-C abolishes the inhibitory action of Tn on actin filaments. This chain is Troponin C, body wall muscle, found in Halocynthia roretzi (Sea squirt).